An 87-amino-acid polypeptide reads, in one-letter code: Apolipoprotein C-I (87 aa).

The signal sequence occupies residues 1–26 (MRLILSLPVLAVVLAMVLEGPAPAQA).

The protein belongs to the apolipoprotein C1 family.

The protein localises to the secreted. Its function is as follows. Inhibitor of lipoprotein binding to the low density lipoprotein (LDL) receptor, LDL receptor-related protein, and very low density lipoprotein (VLDL) receptor. Associates with high density lipoproteins (HDL) and the triacylglycerol-rich lipoproteins in the plasma and makes up about 10% of the protein of the VLDL and 2% of that of HDL. Appears to interfere directly with fatty acid uptake and is also the major plasma inhibitor of cholesteryl ester transfer protein (CETP). Binds free fatty acids and reduces their intracellular esterification. Modulates the interaction of APOE with beta-migrating VLDL and inhibits binding of beta-VLDL to the LDL receptor-related protein. This is Apolipoprotein C-I (APOC1) from Pteropus vampyrus (Large flying fox).